Consider the following 103-residue polypeptide: Large ribosomal subunit protein eL14 (103 aa).

This sequence belongs to the eukaryotic ribosomal protein eL14 family.

The sequence is that of Large ribosomal subunit protein eL14 from Ignicoccus hospitalis (strain KIN4/I / DSM 18386 / JCM 14125).